A 325-amino-acid polypeptide reads, in one-letter code: Phenylalanine--tRNA ligase alpha subunit (325 aa).

Glu251 serves as a coordination point for Mg(2+).

This sequence belongs to the class-II aminoacyl-tRNA synthetase family. Phe-tRNA synthetase alpha subunit type 1 subfamily. In terms of assembly, tetramer of two alpha and two beta subunits. The cofactor is Mg(2+).

Its subcellular location is the cytoplasm. It catalyses the reaction tRNA(Phe) + L-phenylalanine + ATP = L-phenylalanyl-tRNA(Phe) + AMP + diphosphate + H(+). This is Phenylalanine--tRNA ligase alpha subunit from Thermotoga neapolitana (strain ATCC 49049 / DSM 4359 / NBRC 107923 / NS-E).